Consider the following 185-residue polypeptide: MVTTEEISLKNELIRLLKDVNCVKFGDFTLASGKQSKYYVDIKKATTNPKVLKAAAKLVNYYVSKENNENLKIAGVELGSVSIATAVSLETEKDLLIIRKKAKEYGTKNKIEGELNPGDNVIVMEDVTTTGGSVSKAVDEIRAVSGNVKKIYVIVDRQEGAKENLAQNNVELIPLVTIEELGLNK.

Residues Arg-99, Lys-100, Lys-103, and 125-133 contribute to the 5-phospho-alpha-D-ribose 1-diphosphate site; that span reads EDVTTTGGS. Thr-129 and Arg-157 together coordinate orotate.

Belongs to the purine/pyrimidine phosphoribosyltransferase family. PyrE subfamily. In terms of assembly, homodimer. Requires Mg(2+) as cofactor.

The enzyme catalyses orotidine 5'-phosphate + diphosphate = orotate + 5-phospho-alpha-D-ribose 1-diphosphate. It functions in the pathway pyrimidine metabolism; UMP biosynthesis via de novo pathway; UMP from orotate: step 1/2. In terms of biological role, catalyzes the transfer of a ribosyl phosphate group from 5-phosphoribose 1-diphosphate to orotate, leading to the formation of orotidine monophosphate (OMP). The polypeptide is Orotate phosphoribosyltransferase (Methanococcus maripaludis (strain DSM 14266 / JCM 13030 / NBRC 101832 / S2 / LL)).